The primary structure comprises 159 residues: Sulfur carrier protein DsrE2 (159 aa).

Helical transmembrane passes span 21 to 43 (PFIL…TFYG) and 72 to 91 (WFPV…TAMM).

The protein localises to the cell membrane. It participates in energy metabolism; sulfur metabolism. Its function is as follows. Sulfur carrier protein probably involved in sulfur trafficking for oxidative dissimilatory sulfur metabolism. May be a component of a cytoplasmic sulfur relay system delivering sulfur to DsrC. Binds sulfur in the presence of sulfide in vitro. The chain is Sulfur carrier protein DsrE2 from Allochromatium vinosum (strain ATCC 17899 / DSM 180 / NBRC 103801 / NCIMB 10441 / D) (Chromatium vinosum).